The primary structure comprises 281 residues: Bis(5'-nucleosyl)-tetraphosphatase, symmetrical (281 aa).

It belongs to the Ap4A hydrolase family.

It catalyses the reaction P(1),P(4)-bis(5'-adenosyl) tetraphosphate + H2O = 2 ADP + 2 H(+). Its function is as follows. Hydrolyzes diadenosine 5',5'''-P1,P4-tetraphosphate to yield ADP. In Pectobacterium atrosepticum (strain SCRI 1043 / ATCC BAA-672) (Erwinia carotovora subsp. atroseptica), this protein is Bis(5'-nucleosyl)-tetraphosphatase, symmetrical.